Reading from the N-terminus, the 1243-residue chain is Protein MMS22-like (1243 aa).

It belongs to the MMS22 family. MMS22L subfamily. In terms of assembly, component of the MMS22L-TONSL complex, a complex at least composed of MMS22L and TONSL/NFKBIL2. Interacts with RAD51; interaction is direct. Degraded by the ubiquitin-proteasome system upon replication stress.

Its subcellular location is the nucleus. It localises to the chromosome. Functionally, component of the MMS22L-TONSL complex, a complex that promotes homologous recombination-mediated repair of double-strand breaks (DSBs) at stalled or collapsed replication forks. The MMS22L-TONSL complex is required to maintain genome integrity during DNA replication. It mediates the assembly of RAD51 filaments on single-stranded DNA (ssDNA): the MMS22L-TONSL complex is recruited to DSBs following histone replacement by histone chaperones and eviction of the replication protein A complex (RPA/RP-A) from DSBs. Following recruitment to DSBs, the TONSL-MMS22L complex promotes recruitment of RAD51 filaments and subsequent homologous recombination. Within the complex, MMS22L acts by binding ssDNA. In Homo sapiens (Human), this protein is Protein MMS22-like.